Reading from the N-terminus, the 858-residue chain is KN motif and ankyrin repeat domain-containing protein 2 (858 aa).

A disordered region spans residues 1–29 (MAQVLHVSAPFPGTPGPASPPAFPSKEPD). An interaction with AIFM1 region spans residues 1–72 (MAQVLHVSAP…AVQRRPRLGS (72 aa)). Residues 12-23 (PGTPGPASPPAF) show a composition bias toward pro residues. A phosphoserine mark is found at S19, S83, S86, S89, and S92. Residue R105 is modified to Omega-N-methylarginine. The segment at 140–182 (AAPAGLGSLTPSAAGSTSSLVGVGLPPPTPRGSGLSTPVPPSA) is disordered. Residues 148 to 159 (LTPSAAGSTSSL) are compositionally biased toward polar residues. At T168 the chain carries Phosphothreonine. 2 coiled-coil regions span residues 183 to 234 (GHLA…KSQK) and 282 to 313 (EAAL…QADL). Phosphoserine is present on S323. T329 carries the post-translational modification Phosphothreonine. S356 and S375 each carry phosphoserine. Disordered regions lie at residues 412 to 451 (CDGA…PAHD) and 488 to 590 (QKEE…SSAK). Residues 421-435 (APAESSLSPPESEGA) are compositionally biased toward low complexity. Residues 436 to 446 (TQAQPEKNTGQ) show a composition bias toward polar residues. Basic and acidic residues predominate over residues 488 to 499 (QKEEPTDPEAHR). The segment covering 509 to 528 (GSISPRYESSSEDSSTAENF) has biased composition (low complexity). Residue S547 is modified to Phosphoserine. Residues 555–569 (RPKETAKAKTSREES) show a composition bias toward basic and acidic residues. Residue T559 is modified to Phosphothreonine. One copy of the ANK 0; degenerate repeat lies at 621-658 (RELKVAYTTVLQEWLRLACRSDAHPELVRRHLVTFRAM). 5 ANK repeats span residues 673–703 (NGNT…QVDK), 707–740 (AGYS…DVNA), 745–774 (AGQT…DVNV), 778–808 (DGST…DISI), and 812–842 (DGST…KCSF). The interaction with NCOA1 stretch occupies residues 676-842 (TALHYSVSHA…YSRMNIKCSF (167 aa)).

As to quaternary structure, interacts (non-phosphorylated form) with NCOA1; NCOA2 AND NCOA3. Interacts with AIFM1. Interacts with ARHGDIA; the interaction is direct and may regulate the interaction of ARHGDIA with RHOA, RAC1 and CDC42. Interacts (via ANK repeats 1-5) with KIF21A. Post-translationally, phosphorylated by casein kinase II upon estrogen stimulation. Phosphorylation induces the release by KANK2 of NCOA1 and its translocation to the nucleus where NCOA1 can activate gene transcription.

It is found in the cytoplasm. The protein localises to the mitochondrion. Functionally, involved in transcription regulation by sequestering in the cytoplasm nuclear receptor coactivators such as NCOA1, NCOA2 and NCOA3. Involved in regulation of caspase-independent apoptosis by sequestering the proapoptotic factor AIFM1 in mitochondria. Pro-apoptotic stimuli can induce its proteasomal degradation allowing the translocation of AIFM1 to the nucleus to induce apoptosis. Involved in the negative control of vitamin D receptor signaling pathway. Involved in actin stress fibers formation through its interaction with ARHGDIA and the regulation of the Rho signaling pathway. May thereby play a role in cell adhesion and migration, regulating for instance podocytes migration during development of the kidney. Through the Rho signaling pathway may also regulate cell proliferation. The polypeptide is KN motif and ankyrin repeat domain-containing protein 2 (KANK2) (Bos taurus (Bovine)).